A 122-amino-acid polypeptide reads, in one-letter code: Crustacean hyperglycemic hormones 5 (122 aa).

The N-terminal stretch at 1 to 26 (MSLGLIASRLVAVALVVVVACSTTWA) is a signal peptide. 3 cysteine pairs are disulfide-bonded: C55-C91, C71-C87, and C74-C100. V120 carries the valine amide modification.

Belongs to the arthropod CHH/MIH/GIH/VIH hormone family.

It is found in the secreted. Functionally, hormone found in the sinus gland of isopods and decapods which controls the blood sugar level. Has a secretagogue action over the amylase released from the midgut gland. May act as a stress hormone and may be involved in the control of molting and reproduction. This chain is Crustacean hyperglycemic hormones 5 (CHH5), found in Penaeus monodon (Giant tiger prawn).